Reading from the N-terminus, the 98-residue chain is Hainantoxin-XVII-2 (98 aa).

A signal peptide spans 1 to 40; that stretch reads MTTVGVSLFRRSPEKITMKIATFLGLSFLLIASYVLICEA. Positions 41-64 are excised as a propeptide; that stretch reads QHPGFQELLILEENMRDPENSKER. 2 cysteine pairs are disulfide-bonded: C66–C81 and C73–C85.

It belongs to the hainantoxin family. 17 subfamily. In terms of tissue distribution, expressed by the venom gland.

The protein resides in the secreted. In terms of biological role, putative ion channel inhibitor. In Cyriopagopus hainanus (Chinese bird spider), this protein is Hainantoxin-XVII-2.